Consider the following 316-residue polypeptide: Conjugated bile acid hydrolase (316 aa).

Residue C2 is the Nucleophile of the active site. Positions 2 and 18 each coordinate deoxycholate. N81 serves as a coordination point for taurine.

The protein belongs to the peptidase C59 family.

It carries out the reaction cholate + taurine = taurocholate + H2O. It catalyses the reaction taurodeoxycholate + H2O = deoxycholate + taurine. The enzyme catalyses taurochenodeoxycholate + H2O = chenodeoxycholate + taurine. The catalysed reaction is glycocholate + H2O = cholate + glycine. The protein operates within lipid metabolism; bile acid biosynthesis. With respect to regulation, glycocholate hydrolysis is inhibited by various previously identified BSH inhibitors, including KIO(3), NaHIO(3), NaIO(4), CuCl(2), menadione, riboflavin, gossypetin, and the antibiotics oxytetracycline, demeclocycline hydrochloride and methacycline hydrochloride. Bile salt hydrolase that catalyzes the deconjugation of glycine- and taurine-linked bile salts, which occurs naturally in the intestines of animals, releasing amino acid residues and deconjugated bile salts (bile acids). Can hydrolyze the amide bond in the bile salts taurocholate (TCA), taurodeoxycholate (TDCA), taurochenodeoxycholate (TCDCA), taurohyodeoxycholate (THDCA) and tauroursodeoxycholate (TUDCA). Oh et al. did not detect activity with the glycine-conjugated bile salts glycocholate (GCA), glycodeoxycholate (GDCA) and glycochenodeoxycholate (GCDCA). However, a later study shows activity toward glycocholate (GCA). This is Conjugated bile acid hydrolase from Lactobacillus acidophilus.